The primary structure comprises 573 residues: Chaperone Ric-8 (573 aa).

Over residues 308-324 (ESHKEREQDNEKEKDTE) the composition is skewed to basic and acidic residues. Disordered stretches follow at residues 308 to 329 (ESHK…GAGA) and 473 to 493 (GTDY…QQQQ). Phosphoserine is present on residues serine 477, serine 478, serine 480, and serine 483.

Belongs to the synembryn family. As to quaternary structure, interacts with GDP-bound G(i)-alpha protein G-i-alpha-65A. Does not interact with G-alpha proteins when they are in complex with subunits beta and gamma. Interacts with Frq2 in a Ca(2+)-independent manner but does not interact with Frq1. As to expression, expression in the embryo is primarily neural.

It is found in the cytoplasm. The protein resides in the cell cortex. It localises to the presynapse. Chaperone that specifically binds and folds some, but not all, nascent G alpha proteins prior to G protein heterotrimer formation, promoting their stability and activity. Also acts as a guanine nucleotide exchange factor (GEF) for G alpha proteins by stimulating exchange of bound GDP for free GTP. Plays a key role in asymmetric spindle positioning, a step for asymmetric cell division that generates cell diversity during development by activating G(i) alpha protein independently of G-protein coupled receptors. Required during gastrulation and sensory organ precursor (SOP) formation. Plays a role in positively regulating synapse number and neurotransmitter release. This is Chaperone Ric-8 (ric8a) from Drosophila melanogaster (Fruit fly).